Consider the following 74-residue polypeptide: Lantibiotic lichenicidin A1 (74 aa).

Positions 1–42 (MSKKEMILSWKNPMYRTESSYHPAGNILKELQEEEQHSIAGG) are excised as a propeptide. The residue at position 43 (Thr-43) is a 2-oxobutanoic acid. Residues 45 to 49 (TLSTC) constitute a cross-link (beta-methyllanthionine (Thr-Cys)). Ser-47 is modified (2,3-didehydroalanine (Ser)). Residue Thr-48 is modified to (Z)-2,3-didehydrobutyrine. The lanthionine (Ser-Cys) cross-link spans 53–63 (SKPLGNNGYLC). Cross-links (beta-methyllanthionine (Thr-Cys)) lie at residues 64–69 (TVTKEC) and 66–73 (TKECMPSC).

Post-translationally, maturation of lantibiotics involves the enzymatic conversion of Thr, and Ser into dehydrated AA and the formation of thioether bonds with cysteine. This is followed by membrane translocation and cleavage of the modified precursor.

It is found in the secreted. It localises to the cell wall. Lanthionine-containing peptide antibiotic (lantibiotic) active on Gram-positive bacteria. The bactericidal activity of lantibiotics is based on depolarization of energized bacterial cytoplasmic membranes, initiated by the formation of aqueous transmembrane pores. When present individually, LchA1 exhibits activity towards L.lactis HP. When combined with LchA2, it displays activity towards a broad spectrum of non-pathogenic and pathogenic Gram-positive bacteria including strains of L.monocytogenes, methicillin-resistant S.aureus, S.pneumoniae and strains of vancomycin-resistant enterococci, but not towards E.faecium L4001 and BM4147-1. Combined LchA1 and LchA2 peptides also inhibit Bacillus sp. HIL-Y85/54728, L.lactis DPC3417 and B.halodurans C-125, which produce lantibiotics themselves. Inactivated by proteinase K and pronase E, but not by trypsin and chymotrypsin. This is Lantibiotic lichenicidin A1 from Bacillus licheniformis (strain ATCC 14580 / DSM 13 / JCM 2505 / CCUG 7422 / NBRC 12200 / NCIMB 9375 / NCTC 10341 / NRRL NRS-1264 / Gibson 46).